The sequence spans 295 residues: uncharacterized protein (295 aa).

Belongs to the ROK (NagC/XylR) family.

This is an uncharacterized protein from Clostridium perfringens (strain 13 / Type A).